The following is a 290-amino-acid chain: HTH-type transcriptional regulator BudR (290 aa).

Positions 1-58 (MELRYLRYFVAVAEARNFTRAAHDLGISQPPLSQQIQRLEREIGTPLLRRLTRGVELT) constitute an HTH lysR-type domain. A DNA-binding region (H-T-H motif) is located at residues 18–37 (FTRAAHDLGISQPPLSQQIQ).

It belongs to the LysR transcriptional regulatory family.

In terms of biological role, regulator of the budABC operon for 2,3-butanediol synthesis. In Raoultella terrigena (Klebsiella terrigena), this protein is HTH-type transcriptional regulator BudR (budR).